The following is a 104-amino-acid chain: Co-chaperonin GroES 1 (104 aa).

Belongs to the GroES chaperonin family. Heptamer of 7 subunits arranged in a ring. Interacts with the chaperonin GroEL.

Its subcellular location is the cytoplasm. In terms of biological role, together with the chaperonin GroEL, plays an essential role in assisting protein folding. The GroEL-GroES system forms a nano-cage that allows encapsulation of the non-native substrate proteins and provides a physical environment optimized to promote and accelerate protein folding. GroES binds to the apical surface of the GroEL ring, thereby capping the opening of the GroEL channel. The polypeptide is Co-chaperonin GroES 1 (Mesorhizobium japonicum (strain LMG 29417 / CECT 9101 / MAFF 303099) (Mesorhizobium loti (strain MAFF 303099))).